Consider the following 900-residue polypeptide: Protein translocase subunit SecA (900 aa).

ATP is bound by residues Q87, 105–109, and D512; that span reads GEGKT. The disordered stretch occupies residues 849-900; sequence ERLAQQQQFSHQEEDSLNTGSPAQADRKIGRNDPCPCGSGKKYKQCHGRLQK. Zn(2+) contacts are provided by C883, C885, C894, and H895. Basic residues predominate over residues 889 to 900; sequence KKYKQCHGRLQK.

Belongs to the SecA family. Monomer and homodimer. Part of the essential Sec protein translocation apparatus which comprises SecA, SecYEG and auxiliary proteins SecDF-YajC and YidC. Requires Zn(2+) as cofactor.

It is found in the cell inner membrane. It localises to the cytoplasm. It catalyses the reaction ATP + H2O + cellular proteinSide 1 = ADP + phosphate + cellular proteinSide 2.. Functionally, part of the Sec protein translocase complex. Interacts with the SecYEG preprotein conducting channel. Has a central role in coupling the hydrolysis of ATP to the transfer of proteins into and across the cell membrane, serving both as a receptor for the preprotein-SecB complex and as an ATP-driven molecular motor driving the stepwise translocation of polypeptide chains across the membrane. The protein is Protein translocase subunit SecA of Pectobacterium atrosepticum (strain SCRI 1043 / ATCC BAA-672) (Erwinia carotovora subsp. atroseptica).